The following is a 259-amino-acid chain: Proteasome subunit alpha (259 aa).

This sequence belongs to the peptidase T1A family. The 20S proteasome core is composed of 14 alpha and 14 beta subunits that assemble into four stacked heptameric rings, resulting in a barrel-shaped structure. The two inner rings, each composed of seven catalytic beta subunits, are sandwiched by two outer rings, each composed of seven alpha subunits. The catalytic chamber with the active sites is on the inside of the barrel. Has a gated structure, the ends of the cylinder being occluded by the N-termini of the alpha-subunits. Is capped at one or both ends by the proteasome regulatory ATPase, PAN.

The protein localises to the cytoplasm. The formation of the proteasomal ATPase PAN-20S proteasome complex, via the docking of the C-termini of PAN into the intersubunit pockets in the alpha-rings, triggers opening of the gate for substrate entry. Interconversion between the open-gate and close-gate conformations leads to a dynamic regulation of the 20S proteasome proteolysis activity. Component of the proteasome core, a large protease complex with broad specificity involved in protein degradation. The chain is Proteasome subunit alpha from Methanococcus vannielii (strain ATCC 35089 / DSM 1224 / JCM 13029 / OCM 148 / SB).